The following is a 125-amino-acid chain: Glycine cleavage system H protein (125 aa).

The Lipoyl-binding domain occupies 23-105; it reads VSTVGITEHA…FEGGWLFKVR (83 aa). Lysine 64 carries the N6-lipoyllysine modification.

The protein belongs to the GcvH family. The glycine cleavage system is composed of four proteins: P, T, L and H. It depends on (R)-lipoate as a cofactor.

Functionally, the glycine cleavage system catalyzes the degradation of glycine. The H protein shuttles the methylamine group of glycine from the P protein to the T protein. This Streptomyces avermitilis (strain ATCC 31267 / DSM 46492 / JCM 5070 / NBRC 14893 / NCIMB 12804 / NRRL 8165 / MA-4680) protein is Glycine cleavage system H protein.